Here is a 465-residue protein sequence, read N- to C-terminus: Ribulose bisphosphate carboxylase large chain (465 aa).

Lys4 is modified (N6,N6,N6-trimethyllysine). The substrate site is built by Asn113 and Thr163. The active-site Proton acceptor is the Lys165. Lys167 lines the substrate pocket. The Mg(2+) site is built by Lys191, Asp193, and Glu194. The residue at position 191 (Lys191) is an N6-carboxylysine. Catalysis depends on His284, which acts as the Proton acceptor. Arg285, His317, and Ser369 together coordinate substrate.

This sequence belongs to the RuBisCO large chain family. Type I subfamily. As to quaternary structure, heterohexadecamer of 8 large chains and 8 small chains; disulfide-linked. The disulfide link is formed within the large subunit homodimers. Requires Mg(2+) as cofactor. In terms of processing, the disulfide bond which can form in the large chain dimeric partners within the hexadecamer appears to be associated with oxidative stress and protein turnover.

Its subcellular location is the plastid. The protein localises to the chloroplast. It catalyses the reaction 2 (2R)-3-phosphoglycerate + 2 H(+) = D-ribulose 1,5-bisphosphate + CO2 + H2O. It carries out the reaction D-ribulose 1,5-bisphosphate + O2 = 2-phosphoglycolate + (2R)-3-phosphoglycerate + 2 H(+). Its function is as follows. RuBisCO catalyzes two reactions: the carboxylation of D-ribulose 1,5-bisphosphate, the primary event in carbon dioxide fixation, as well as the oxidative fragmentation of the pentose substrate in the photorespiration process. Both reactions occur simultaneously and in competition at the same active site. This Clitoria ternatea (Butterfly pea) protein is Ribulose bisphosphate carboxylase large chain.